A 360-amino-acid chain; its full sequence is Phospho-N-acetylmuramoyl-pentapeptide-transferase (360 aa).

The next 10 membrane-spanning stretches (helical) occupy residues 27 to 47 (IVSLLTALFISLWMGPHLIAW), 72 to 92 (PTMGGLMILFSITISVLMWAY), 94 to 114 (SNPYVWCVLFILIGYGIVGFI), 132 to 152 (WKYFWQSIIALAAAFTMYSIG), 168 to 188 (IMPQLGLLYVLLAYFVIVGTS), 199 to 219 (GLAIMPTVFVAAGFALVAWAT), 236 to 256 (AGELVIVCTAIVGAGLGFLWF), 263 to 283 (VFMGDVGSLALGGALGTIAVL), 288 to 308 (FLLVIMGGVFVVETLSVILQV), and 338 to 358 (VIVRFWIISLMLVLIGLATLK).

It belongs to the glycosyltransferase 4 family. MraY subfamily. It depends on Mg(2+) as a cofactor.

It is found in the cell inner membrane. The catalysed reaction is UDP-N-acetyl-alpha-D-muramoyl-L-alanyl-gamma-D-glutamyl-meso-2,6-diaminopimeloyl-D-alanyl-D-alanine + di-trans,octa-cis-undecaprenyl phosphate = di-trans,octa-cis-undecaprenyl diphospho-N-acetyl-alpha-D-muramoyl-L-alanyl-D-glutamyl-meso-2,6-diaminopimeloyl-D-alanyl-D-alanine + UMP. Its pathway is cell wall biogenesis; peptidoglycan biosynthesis. Catalyzes the initial step of the lipid cycle reactions in the biosynthesis of the cell wall peptidoglycan: transfers peptidoglycan precursor phospho-MurNAc-pentapeptide from UDP-MurNAc-pentapeptide onto the lipid carrier undecaprenyl phosphate, yielding undecaprenyl-pyrophosphoryl-MurNAc-pentapeptide, known as lipid I. The protein is Phospho-N-acetylmuramoyl-pentapeptide-transferase of Yersinia pseudotuberculosis serotype O:1b (strain IP 31758).